The sequence spans 805 residues: Phosphoinositide 3-kinase adapter protein 1 (805 aa).

A TIR domain is found at 8 to 145 (RGCDILIVYS…AVKKAISEDS (138 aa)). The segment at 10–144 (CDILIVYSPD…AAVKKAISED (135 aa)) is necessary and sufficient to mediate inhibition of NF-kappa-B downstream of activated TLRs; may mediate interaction with MYD88 and TIRAP. The tract at residues 145 to 165 (SGCDSVTDTEPEDEKVVSYSK) is disordered. The 137-residue stretch at 181–317 (VQPDRIRCGA…NIPASGLHLF (137 aa)) folds into the DBB domain. Tyr263 is modified (phosphotyrosine). A phosphotyrosine; by SYK mark is found at Tyr419, Tyr444, and Tyr459. Tyr513 carries the post-translational modification Phosphotyrosine; by ABL1. Residues 527–547 (ASRPPVPVPRPETTAPGAHQL) are disordered. Phosphotyrosine; by ABL1 is present on residues Tyr553 and Tyr570. Positions 571–590 (VSSESIRKGPPVRPWRDRPQ) are disordered. A Phosphotyrosine; by ABL1 modification is found at Tyr594. Ser642 bears the Phosphoserine mark. Positions 645–667 (FQQENLKRLRDSITRRQREKQKS) form a coiled coil. Residues 654 to 672 (RDSITRRQREKQKSGKQTD) are compositionally biased toward basic and acidic residues. Positions 654 to 679 (RDSITRRQREKQKSGKQTDLEITVPI) are disordered. Position 694 is a phosphotyrosine; by ABL1 (Tyr694). The interval 697–805 (GPRKSVIPPR…PPPPVPPRGR (109 aa)) is disordered. Over residues 707–716 (TELRRGDWKT) the composition is skewed to basic and acidic residues. Positions 717-740 (DSTSSTASSTSNRSSTRSLLSVSS) are enriched in low complexity. Ser718 bears the Phosphoserine mark. Pro residues predominate over residues 795 to 805 (HPPPPVPPRGR).

Homooligomer. Interacts (phosphorylated on tyrosine residues within YXXM motifs) with PIK3R1 (via SH2 domain); required for BCR- and TLR-mediated activation of phosphoinositide 3-kinase. Interacts (via polyproline C-terminal region) with ABI1 (via SH3 domain); the interaction promotes phosphorylation of PIK3AP1 by ABL1. May interact with MYD88 and TIRAP. Constitutively phosphorylated. Phosphorylated on tyrosine residues in C-terminal region by ABL1. Phosphorylated on tyrosine residues within the YXXM motifs by BTK and SYK. Isoform 1 and isoform 2 are phosphorylated on tyrosine residues, most likely within the YXXM motifs, via CD19 activation. Toll-like receptor activation induces appearance of a phosphorylated form associated with membranes. As to expression, expressed in natural killer (NK) cells.

It localises to the cytoplasm. The protein resides in the cell membrane. Functionally, signaling adapter that contributes to B-cell development by linking B-cell receptor (BCR) signaling to the phosphoinositide 3-kinase (PI3K)-Akt signaling pathway. Has a complementary role to the BCR coreceptor CD19, coupling BCR and PI3K activation by providing a docking site for the PI3K subunit PIK3R1. Alternatively, links Toll-like receptor (TLR) signaling to PI3K activation, a process preventing excessive inflammatory cytokine production. Also involved in the activation of PI3K in natural killer cells. May be involved in the survival of mature B-cells via activation of REL. This chain is Phosphoinositide 3-kinase adapter protein 1 (PIK3AP1), found in Homo sapiens (Human).